The following is a 92-amino-acid chain: Small ribosomal subunit protein uS19c (92 aa).

It belongs to the universal ribosomal protein uS19 family.

It localises to the plastid. It is found in the chloroplast. Functionally, protein S19 forms a complex with S13 that binds strongly to the 16S ribosomal RNA. The sequence is that of Small ribosomal subunit protein uS19c from Psilotum nudum (Whisk fern).